Consider the following 90-residue polypeptide: Small ribosomal subunit protein uS15 (90 aa).

The protein belongs to the universal ribosomal protein uS15 family. As to quaternary structure, part of the 30S ribosomal subunit. Forms a bridge to the 50S subunit in the 70S ribosome, contacting the 23S rRNA.

Its function is as follows. One of the primary rRNA binding proteins, it binds directly to 16S rRNA where it helps nucleate assembly of the platform of the 30S subunit by binding and bridging several RNA helices of the 16S rRNA. Forms an intersubunit bridge (bridge B4) with the 23S rRNA of the 50S subunit in the ribosome. This is Small ribosomal subunit protein uS15 from Paraburkholderia xenovorans (strain LB400).